A 198-amino-acid chain; its full sequence is Eukaryotic translation initiation factor isoform 4E (198 aa).

A disordered region spans residues 1–25 (MATDDVNEPLPAAAELPATEAEKQP). Ala-2 carries the post-translational modification N-acetylalanine. Residues 8–19 (EPLPAAAELPAT) are compositionally biased toward low complexity. Residues 46 to 47 (WG) and 92 to 93 (WE) contribute to the mRNA site. Cys-97 and Cys-138 are joined by a disulfide. Residue 145 to 152 (RPQSKQDK) participates in mRNA binding.

It belongs to the eukaryotic initiation factor 4E family. EIF4F is a multi-subunit complex, the composition of which varies with external and internal environmental conditions. It is composed of at least EIF4A, EIF4E and EIF4G. EIF4E is also known to interact with other partners. In higher plants two isoforms of EIF4F have been identified, named isoform EIF4F and isoform EIF(iso)4F. Isoform EIF4F has subunits p220 and p26, whereas isoform EIF(iso)4F has subunits p82 and p28. This isoform interacts with the viral protein genome linked (VPg)-proteinase of turnip mosaic potyvirus. Interacts directly with LOX2. Interacts with BTF3. Post-translationally, according to the redox status, the Cys-97-Cys-138 disulfide bridge may have a role in regulating protein function by affecting its ability to bind capped mRNA. As to expression, abundant in floral organs and in young developing tissues.

Recognizes and binds the 7-methylguanosine-containing mRNA cap during an early step in the initiation of protein synthesis and facilitates ribosome binding by inducing the unwinding of the mRNAs secondary structures. Mediates susceptibility to Turnipmosaic potyvirus (TuMV) and Tobacco etch potyvirus (TEV). This is Eukaryotic translation initiation factor isoform 4E (EIF(ISO)4E) from Arabidopsis thaliana (Mouse-ear cress).